The sequence spans 162 residues: MERILENAMYAARWLLAPIYFGLAFALLALAIKFFQEIFHILPMILSISEADLVLTLLSLIDMALVGGLLVMVMISGYENFVSQLDVDEGKEKLDWLGKMDSSSLKLKVAASIVAISSIHLLRMFMDVQQIDSEKLMWYVIIHLTFVVSAFAMGYMDKITKH.

3 consecutive transmembrane segments (helical) span residues 15–35 (LLAP…IKFF), 53–73 (LVLT…LVMV), and 136–156 (LMWY…MGYM).

This sequence belongs to the UPF0114 family.

The protein resides in the cell membrane. The sequence is that of UPF0114 protein PST_0950 from Stutzerimonas stutzeri (strain A1501) (Pseudomonas stutzeri).